The chain runs to 47 residues: Lysis protein for colicin E8 (47 aa).

An N-terminal signal peptide occupies residues 1–19 (MKKITGIILLLLAVIILAA). Cysteine 20 carries N-palmitoyl cysteine lipidation. A lipid anchor (S-diacylglycerol cysteine) is attached at cysteine 20.

Its subcellular location is the cell outer membrane. Its function is as follows. Lysis proteins are required for both colicin release and partial cell lysis. This is Lysis protein for colicin E8 (lys) from Escherichia coli.